A 159-amino-acid chain; its full sequence is MKAIFAGSFDPPTFGHLDLVLRARSLFAEVHVLVAVNVQKRYLLSECERVDLMRQVLGDRPGVYVFPWRSLVVTYARDVGARVLVRGVRNATDFCQEFDLAWVHRALDAGLETVFLAAKPCYAALRSSMVREVASFGGDVSTFVPRVVARLLQEKFTQA.

Ser-8 provides a ligand contact to substrate. ATP is bound by residues Ser-8–Phe-9 and His-16. Residues Lys-40, Val-72, and Arg-86 each contribute to the substrate site. Residues Gly-87 to Arg-89, Glu-97, and Tyr-122 to Ser-128 each bind ATP.

Belongs to the bacterial CoaD family. As to quaternary structure, homohexamer. It depends on Mg(2+) as a cofactor.

Its subcellular location is the cytoplasm. It carries out the reaction (R)-4'-phosphopantetheine + ATP + H(+) = 3'-dephospho-CoA + diphosphate. It functions in the pathway cofactor biosynthesis; coenzyme A biosynthesis; CoA from (R)-pantothenate: step 4/5. Its function is as follows. Reversibly transfers an adenylyl group from ATP to 4'-phosphopantetheine, yielding dephospho-CoA (dPCoA) and pyrophosphate. This chain is Phosphopantetheine adenylyltransferase, found in Treponema pallidum (strain Nichols).